The chain runs to 294 residues: 33 kDa chaperonin (294 aa).

2 disulfide bridges follow: cysteine 239–cysteine 241 and cysteine 272–cysteine 275.

This sequence belongs to the HSP33 family. Post-translationally, under oxidizing conditions two disulfide bonds are formed involving the reactive cysteines. Under reducing conditions zinc is bound to the reactive cysteines and the protein is inactive.

The protein localises to the cytoplasm. Its function is as follows. Redox regulated molecular chaperone. Protects both thermally unfolding and oxidatively damaged proteins from irreversible aggregation. Plays an important role in the bacterial defense system toward oxidative stress. The sequence is that of 33 kDa chaperonin from Lacticaseibacillus paracasei (strain ATCC 334 / BCRC 17002 / CCUG 31169 / CIP 107868 / KCTC 3260 / NRRL B-441) (Lactobacillus paracasei).